The chain runs to 283 residues: Probable cytochrome c oxidase subunit 3 (283 aa).

Helical transmembrane passes span Pro26–Met46, Phe51–Trp71, Ile94–Phe114, Cys179–Tyr199, Phe217–Ile237, and Ala261–Phe281.

It belongs to the cytochrome c oxidase subunit 3 family.

The protein resides in the cell membrane. It catalyses the reaction 4 Fe(II)-[cytochrome c] + O2 + 8 H(+)(in) = 4 Fe(III)-[cytochrome c] + 2 H2O + 4 H(+)(out). The protein is Probable cytochrome c oxidase subunit 3 (ctaE) of Rickettsia conorii (strain ATCC VR-613 / Malish 7).